The chain runs to 109 residues: Large ribosomal subunit protein eL30A (109 aa).

It belongs to the eukaryotic ribosomal protein eL30 family. In terms of assembly, component of the large ribosomal subunit (LSU). Mature yeast ribosomes consist of a small (40S) and a large (60S) subunit. The 40S small subunit contains 1 molecule of ribosomal RNA (18S rRNA) and at least 33 different proteins. The large 60S subunit contains 3 rRNA molecules (25S, 5.8S and 5S rRNA) and at least 46 different proteins.

It is found in the cytoplasm. In terms of biological role, component of the ribosome, a large ribonucleoprotein complex responsible for the synthesis of proteins in the cell. The small ribosomal subunit (SSU) binds messenger RNAs (mRNAs) and translates the encoded message by selecting cognate aminoacyl-transfer RNA (tRNA) molecules. The large subunit (LSU) contains the ribosomal catalytic site termed the peptidyl transferase center (PTC), which catalyzes the formation of peptide bonds, thereby polymerizing the amino acids delivered by tRNAs into a polypeptide chain. The nascent polypeptides leave the ribosome through a tunnel in the LSU and interact with protein factors that function in enzymatic processing, targeting, and the membrane insertion of nascent chains at the exit of the ribosomal tunnel. This Schizosaccharomyces pombe (strain 972 / ATCC 24843) (Fission yeast) protein is Large ribosomal subunit protein eL30A (rpl3001).